Consider the following 413-residue polypeptide: MSASVSPLAPKHYPAMPVIHGVRIATAAAGIKYKGRTDLMLMVFDRPAEAAGVFTRSLCPSAPVDFCRRNLVHGKARAVVVNSGNANAFTGLKGREATQATAEAAAKAIGCATTDIFLASTGVIGEPLDAGKFSHLLGDMAESATEDFWTEAAKAIMTTDTYPKVATETVLLGQVPVTINGIAKGAGMIAPDMATMLSFVVTDAPIKADALQSLLSKGVGSTFNSVTVDSDTSTSDTLMLFATGTAAERGAPEITDAADKRLADFKKALGRVLKSLALQVVRDGEGARKMVEVEVTGAKSAASAKKIALSIANSPLVKTAVAGEDANWGRVVMAVGKAGEPADRDRLAIWFGDIRVAHQGERDPAYSEDATSAYMEGEDIRIRVDLGIGRGKATVWTCDLTKEYVAINGDYRS.

Residues Thr158, Lys184, Thr195, Glu285, Asn408, and Ser413 each contribute to the substrate site. Thr195 serves as the catalytic Nucleophile.

The protein belongs to the ArgJ family. As to quaternary structure, heterotetramer of two alpha and two beta chains.

The protein localises to the cytoplasm. It carries out the reaction N(2)-acetyl-L-ornithine + L-glutamate = N-acetyl-L-glutamate + L-ornithine. The catalysed reaction is L-glutamate + acetyl-CoA = N-acetyl-L-glutamate + CoA + H(+). The protein operates within amino-acid biosynthesis; L-arginine biosynthesis; L-ornithine and N-acetyl-L-glutamate from L-glutamate and N(2)-acetyl-L-ornithine (cyclic): step 1/1. It functions in the pathway amino-acid biosynthesis; L-arginine biosynthesis; N(2)-acetyl-L-ornithine from L-glutamate: step 1/4. Functionally, catalyzes two activities which are involved in the cyclic version of arginine biosynthesis: the synthesis of N-acetylglutamate from glutamate and acetyl-CoA as the acetyl donor, and of ornithine by transacetylation between N(2)-acetylornithine and glutamate. This chain is Arginine biosynthesis bifunctional protein ArgJ, found in Brucella suis biovar 1 (strain 1330).